Here is a 285-residue protein sequence, read N- to C-terminus: Cytosolic Fe-S cluster assembly factor CFD1 (285 aa).

30–37 (GKGGVGKS) lines the ATP pocket. Residues Cys206 and Cys209 each contribute to the [4Fe-4S] cluster site.

It belongs to the Mrp/NBP35 ATP-binding proteins family. NUBP2/CFD1 subfamily. As to quaternary structure, heterotetramer of 2 NBP35 and 2 CFD1 chains. Requires [4Fe-4S] cluster as cofactor.

It localises to the cytoplasm. Its function is as follows. Component of the cytosolic iron-sulfur (Fe/S) protein assembly (CIA) machinery. Required for maturation of extramitochondrial Fe-S proteins. The NBP35-CFD1 heterotetramer forms a Fe-S scaffold complex, mediating the de novo assembly of an Fe-S cluster and its transfer to target apoproteins. Required for biogenesis and export of both ribosomal subunits, which may reflect a role in assembly of the Fe/S clusters in RLI1, a protein which performs rRNA processing and ribosome export. This chain is Cytosolic Fe-S cluster assembly factor CFD1, found in Candida glabrata (strain ATCC 2001 / BCRC 20586 / JCM 3761 / NBRC 0622 / NRRL Y-65 / CBS 138) (Yeast).